A 486-amino-acid polypeptide reads, in one-letter code: N-succinylglutamate 5-semialdehyde dehydrogenase (486 aa).

Residue 220 to 225 participates in NAD(+) binding; that stretch reads GSSRTG. Residues Glu243 and Cys277 contribute to the active site.

Belongs to the aldehyde dehydrogenase family. AstD subfamily.

It catalyses the reaction N-succinyl-L-glutamate 5-semialdehyde + NAD(+) + H2O = N-succinyl-L-glutamate + NADH + 2 H(+). The protein operates within amino-acid degradation; L-arginine degradation via AST pathway; L-glutamate and succinate from L-arginine: step 4/5. Functionally, catalyzes the NAD-dependent reduction of succinylglutamate semialdehyde into succinylglutamate. In Shewanella piezotolerans (strain WP3 / JCM 13877), this protein is N-succinylglutamate 5-semialdehyde dehydrogenase.